The following is a 284-amino-acid chain: 2-dehydro-3-deoxyphosphooctonate aldolase (284 aa).

It belongs to the KdsA family.

It localises to the cytoplasm. The enzyme catalyses D-arabinose 5-phosphate + phosphoenolpyruvate + H2O = 3-deoxy-alpha-D-manno-2-octulosonate-8-phosphate + phosphate. It functions in the pathway carbohydrate biosynthesis; 3-deoxy-D-manno-octulosonate biosynthesis; 3-deoxy-D-manno-octulosonate from D-ribulose 5-phosphate: step 2/3. It participates in bacterial outer membrane biogenesis; lipopolysaccharide biosynthesis. The protein is 2-dehydro-3-deoxyphosphooctonate aldolase of Paraburkholderia phymatum (strain DSM 17167 / CIP 108236 / LMG 21445 / STM815) (Burkholderia phymatum).